A 532-amino-acid polypeptide reads, in one-letter code: Probable cytochrome c oxidase subunit 1 (532 aa).

The next 8 helical transmembrane spans lie at 33 to 53 (IMYI…SLLF), 74 to 94 (VLIT…ALFG), 95 to 115 (GFGN…FPRL), 118 to 138 (ISFW…FVDG), 163 to 183 (MAIF…INLI), 200 to 220 (PLFV…MPVL), 252 to 272 (LFWF…FGIV), and 284 to 304 (IFGY…GFIV). Residue histidine 79 coordinates Fe(II)-heme a. Histidine 258 and tyrosine 262 together coordinate Cu cation. Residues histidine 307 and histidine 308 each contribute to the Cu cation site. Transmembrane regions (helical) follow at residues 318-338 (ALIY…IKIF) and 355-375 (MLFS…GIIL). Residue histidine 393 coordinates heme a3. The next 3 membrane-spanning stretches (helical) occupy residues 394–414 (FHYT…YYWF), 431–451 (FWIT…LGLA), and 473–493 (IGAG…FYTL). Histidine 395 serves as a coordination point for Fe(II)-heme a.

It belongs to the heme-copper respiratory oxidase family.

It is found in the cell membrane. The enzyme catalyses 4 Fe(II)-[cytochrome c] + O2 + 8 H(+)(in) = 4 Fe(III)-[cytochrome c] + 2 H2O + 4 H(+)(out). Its pathway is energy metabolism; oxidative phosphorylation. Functionally, cytochrome c oxidase is the component of the respiratory chain that catalyzes the reduction of oxygen to water. Subunits 1-3 form the functional core of the enzyme complex. CO I is the catalytic subunit of the enzyme. Electrons originating in cytochrome c are transferred via the copper A center of subunit 2 and heme A of subunit 1 to the bimetallic center formed by heme A3 and copper B. This Rickettsia felis (strain ATCC VR-1525 / URRWXCal2) (Rickettsia azadi) protein is Probable cytochrome c oxidase subunit 1 (ctaD).